Consider the following 421-residue polypeptide: UPF0415 protein C7orf25 homolog (421 aa).

Belongs to the UPF0415 family.

This chain is UPF0415 protein C7orf25 homolog, found in Rattus norvegicus (Rat).